The following is a 209-amino-acid chain: Kinetochore protein Spc25 (209 aa).

Positions 74-107 form a coiled coil; it reads TRAVREKLAEERQKNAEMQAQLEKANDERIEQMD.

Belongs to the SPC25 family. As to quaternary structure, component of the Ndc80 complex, which is composed of Ndc80, Nuf2 and Spc25.

It localises to the nucleus. The protein resides in the chromosome. The protein localises to the centromere. Its subcellular location is the kinetochore. Functionally, acts as a component of the essential kinetochore-associated Ndc80 complex, which is required for chromosome segregation and spindle checkpoint activity during meiosis and mitosis. Required for kinetochore integrity and the organization of stable microtubule binding sites in the outer plate of the kinetochore. Participates in SAC signaling that responds specifically to disruptions in spindle microtubule dynamics. The NDC80 complex synergistically enhances the affinity of the SKA1 complex for microtubules and may allow the NDC80 complex to track depolymerizing microtubules. This is Kinetochore protein Spc25 from Drosophila grimshawi (Hawaiian fruit fly).